The chain runs to 88 residues: Large ribosomal subunit protein bL31B (88 aa).

The protein belongs to the bacterial ribosomal protein bL31 family. Type B subfamily. Part of the 50S ribosomal subunit.

This Bordetella bronchiseptica (strain ATCC BAA-588 / NCTC 13252 / RB50) (Alcaligenes bronchisepticus) protein is Large ribosomal subunit protein bL31B.